Consider the following 470-residue polypeptide: Glutamate--tRNA ligase 1 (470 aa).

The 'HIGH' region signature appears at 15–25 (PSPTGTMHIGT). The 'KMSKS' region signature appears at 241-245 (KLSKR). An ATP-binding site is contributed by K244.

This sequence belongs to the class-I aminoacyl-tRNA synthetase family. Glutamate--tRNA ligase type 1 subfamily. In terms of assembly, monomer.

Its subcellular location is the cytoplasm. It catalyses the reaction tRNA(Glu) + L-glutamate + ATP = L-glutamyl-tRNA(Glu) + AMP + diphosphate. Functionally, catalyzes the attachment of glutamate to tRNA(Glu) in a two-step reaction: glutamate is first activated by ATP to form Glu-AMP and then transferred to the acceptor end of tRNA(Glu). The polypeptide is Glutamate--tRNA ligase 1 (Jannaschia sp. (strain CCS1)).